Here is a 500-residue protein sequence, read N- to C-terminus: Glycerol kinase (500 aa).

Threonine 12 serves as a coordination point for ADP. ATP is bound by residues threonine 12, threonine 13, and serine 14. Threonine 12 contributes to the sn-glycerol 3-phosphate binding site. Arginine 16 serves as a coordination point for ADP. Positions 82, 83, 134, and 243 each coordinate sn-glycerol 3-phosphate. Glycerol contacts are provided by arginine 82, glutamate 83, tyrosine 134, aspartate 243, and glutamine 244. Threonine 265 and glycine 308 together coordinate ADP. The ATP site is built by threonine 265, glycine 308, glutamine 312, and glycine 411. Glycine 411 serves as a coordination point for ADP.

Belongs to the FGGY kinase family.

The enzyme catalyses glycerol + ATP = sn-glycerol 3-phosphate + ADP + H(+). The protein operates within polyol metabolism; glycerol degradation via glycerol kinase pathway; sn-glycerol 3-phosphate from glycerol: step 1/1. Inhibited by fructose 1,6-bisphosphate (FBP). In terms of biological role, key enzyme in the regulation of glycerol uptake and metabolism. Catalyzes the phosphorylation of glycerol to yield sn-glycerol 3-phosphate. This Chelativorans sp. (strain BNC1) protein is Glycerol kinase.